A 597-amino-acid chain; its full sequence is Phragmoplastin interacting protein 1 (597 aa).

Residues 18-136 (ESLSVSVSET…KTPKKAEEGN (119 aa)) are disordered. Residues 20–29 (LSVSVSETNP) are compositionally biased toward polar residues. Residues 30 to 40 (QSQSLKLLLDS) are compositionally biased toward low complexity. 2 stretches are compositionally biased toward basic residues: residues 43–53 (HKPRLSKREKR) and 112–129 (QKKK…NKTP). A Nuclear localization signal motif is present at residues 112–119 (QKKKNKKK). 2 consecutive RRM domains span residues 161-238 (NKLY…QYVK) and 262-338 (NRVY…CALK). CCHC-type zinc fingers lie at residues 397 to 411 (CYEC…TACP), 481 to 495 (CYEC…TACP), and 576 to 591 (CYEC…ACPN).

Interacts with phragmoplastins (e.g. DRP1A, DRP1B, DRP1C, DRP1D and DRP1E) and with GTP-bound ARAC11/ROP1 as well as with Ran2 transcripts.

It is found in the nucleus. It localises to the cell membrane. The protein resides in the cytoplasm. Its subcellular location is the cytoskeleton. The protein localises to the phragmoplast. In terms of biological role, RNA-binding protein which mediates polarized mRNA (e.g. Ran2 transcripts mRNA) transport from the nucleus to the vicinity of the cell plate during cytokinesis and phragmoplast formation. The sequence is that of Phragmoplastin interacting protein 1 from Arabidopsis thaliana (Mouse-ear cress).